Here is a 377-residue protein sequence, read N- to C-terminus: Chaperone protein DnaJ (377 aa).

The J domain occupies 5–70; that stretch reads DYYQVLGVAK…QKRAAYDQYG (66 aa). The segment at 137 to 215 adopts a CR-type zinc-finger fold; it reads GYDTQIRVPS…CHGAGKTKET (79 aa). 8 residues coordinate Zn(2+): C150, C153, C167, C170, C189, C192, C203, and C206. CXXCXGXG motif repeat units follow at residues 150–157, 167–174, 189–196, and 203–210; these read CEICHGSG, CPTCNGSG, CPKCHGTG, and CTHCHGAG.

This sequence belongs to the DnaJ family. As to quaternary structure, homodimer. Zn(2+) serves as cofactor.

The protein localises to the cytoplasm. In terms of biological role, participates actively in the response to hyperosmotic and heat shock by preventing the aggregation of stress-denatured proteins and by disaggregating proteins, also in an autonomous, DnaK-independent fashion. Unfolded proteins bind initially to DnaJ; upon interaction with the DnaJ-bound protein, DnaK hydrolyzes its bound ATP, resulting in the formation of a stable complex. GrpE releases ADP from DnaK; ATP binding to DnaK triggers the release of the substrate protein, thus completing the reaction cycle. Several rounds of ATP-dependent interactions between DnaJ, DnaK and GrpE are required for fully efficient folding. Also involved, together with DnaK and GrpE, in the DNA replication of plasmids through activation of initiation proteins. The chain is Chaperone protein DnaJ from Paraburkholderia phymatum (strain DSM 17167 / CIP 108236 / LMG 21445 / STM815) (Burkholderia phymatum).